Consider the following 466-residue polypeptide: Lipase 2 (466 aa).

An N-terminal signal peptide occupies residues 1–16 (MKGLVFLLGLLPTIYA). A disulfide bridge links Cys-112 with Cys-285. Ser-196 serves as the catalytic Charge relay system. N-linked (GlcNAc...) asparagine glycosylation is found at Asn-231, Asn-319, and Asn-331. Catalysis depends on charge relay system residues Asp-348 and His-381. An intrachain disulfide couples Cys-364 to Cys-409. Asn-422 and Asn-451 each carry an N-linked (GlcNAc...) asparagine glycan.

The protein belongs to the AB hydrolase superfamily. Lipase family. Class Lip subfamily.

It is found in the secreted. The enzyme catalyses a triacylglycerol + H2O = a diacylglycerol + a fatty acid + H(+). In terms of biological role, secreted lipase that is able to hydrolyze both the neutral triacylglycerols and the monopalmitate ester Tween 40, allowing the use of hydrolyzed products as carbon sources. Has broad lipolytic activity, which may be important for colonization and subsequent infection, therefore contributing to the persistence and virulence in human tissue. My be important for alimentary tract colonization, but not oral infection. Facilitates invasive disease via lipid-based suppression of the IL-17 response. Inhibits IL-17 production indirectly by suppressing IL-23 production by tissue-resident dendritic cells. In Candida albicans (strain SC5314 / ATCC MYA-2876) (Yeast), this protein is Lipase 2.